Reading from the N-terminus, the 465-residue chain is MDKSQGVLLSSNVGAGSRPWPELLGSAHWDGLLDPLDLTLRRLILLCGDLCQVTYDSFNSDSHSRYCGSCRFSRATLLDRTQFPAAGDLSVAAYLYATSDATAFPGSMVYSMSREAWSKESNWIGYVAVSNDAAAAASGQRVIYVAWRGTIRSLEWVDVLKPDLVDHDDILPEGHPGRGRSRVMKGWYLIYSSTDERSPFSKYSARDQMLAAVRELVARYRNESLSVVCTGHSLGASLATLCAFDIVVNGVSKVGDGAHIPVTAVVFGSPQIGNPEFKKQFEEQPNLRALHVRNTPDLIPLYPSGLLGYANVGKTLQVDSKKSPYVKRDTSPGDYHNLQGILHTVAGWDGKDGEFKLQVKRSVALVNKSSGFLKDSNLVPESWWVERNKGMVLGQNGEWQLEGPAEENLPVPPVVTGKIIDDDVAAVATSSSAKEGKKTGKGSKLLSGLIDQLLCVPDTCKAGAA.

Ser233 acts as the Acyl-ester intermediate in catalysis. Catalysis depends on charge relay system residues Ser233, Asp297, and His336.

Belongs to the AB hydrolase superfamily. Lipase family.

The protein resides in the cytoplasm. In terms of biological role, acylhydrolase that catalyzes the hydrolysis of phospholipids at the sn-1 position. This chain is Phospholipase A1-II 5, found in Oryza sativa subsp. indica (Rice).